A 289-amino-acid polypeptide reads, in one-letter code: Phosphatidylglycerol--prolipoprotein diacylglyceryl transferase (289 aa).

7 consecutive transmembrane segments (helical) span residues L17–G37, M57–Y77, I89–A109, W121–I141, Q174–A194, G200–F220, and I235–W255. R140 lines the a 1,2-diacyl-sn-glycero-3-phospho-(1'-sn-glycerol) pocket.

This sequence belongs to the Lgt family.

The protein localises to the cell inner membrane. It carries out the reaction L-cysteinyl-[prolipoprotein] + a 1,2-diacyl-sn-glycero-3-phospho-(1'-sn-glycerol) = an S-1,2-diacyl-sn-glyceryl-L-cysteinyl-[prolipoprotein] + sn-glycerol 1-phosphate + H(+). Its pathway is protein modification; lipoprotein biosynthesis (diacylglyceryl transfer). Functionally, catalyzes the transfer of the diacylglyceryl group from phosphatidylglycerol to the sulfhydryl group of the N-terminal cysteine of a prolipoprotein, the first step in the formation of mature lipoproteins. This is Phosphatidylglycerol--prolipoprotein diacylglyceryl transferase from Nitrosospira multiformis (strain ATCC 25196 / NCIMB 11849 / C 71).